Consider the following 188-residue polypeptide: Vascular endothelial growth factor A-A (188 aa).

Residues 1–23 (MNLVVYLIQLFLAALLHLSAVKA) form the signal peptide. 3 cysteine pairs are disulfide-bonded: C49/C91, C80/C125, and C84/C127. Residue N98 is glycosylated (N-linked (GlcNAc...) asparagine).

The protein belongs to the PDGF/VEGF growth factor family. Homodimer; disulfide-linked. Isoform VEGF165 binds kdr and kdrl. As to expression, predominantly expressed in regions associated with active vascularization. From 15-16 hours post-fertilization (hpf), expressed in the anterior forebrain, the mesoderm underlying and lateral to the anterior hindbrain, the mesoderm underlying and lateral to the posterior hindbrain, and in the ventral medial portions of the somites. By 30-36 hpf, expression in the somites is decreased, while strong expression is observed in the region of the developing glomeruli and in the anterior portion of the pronephric ducts, the pharyngeal arches, and the brain. By 72 hpf, expression remains only in the pronephros region.

It localises to the secreted. In terms of biological role, growth factor active in angiogenesis, vasculogenesis and endothelial cell growth. Induces endothelial cell proliferation, promotes cell migration, inhibits apoptosis, and induces permeabilization of blood vessels. Required for intersegmental vessel development in the tail during embryogenesis. Acts both upstream of kdr and tie1 to stimulate endothelial cell differentiation, and upstream of gata1 to stimulate hematopoietic cell differentiation. The sequence is that of Vascular endothelial growth factor A-A (vegfaa) from Danio rerio (Zebrafish).